We begin with the raw amino-acid sequence, 383 residues long: Succinyl-diaminopimelate desuccinylase (383 aa).

H74 is a Zn(2+) binding site. D76 is a catalytic residue. D107 lines the Zn(2+) pocket. The active-site Proton acceptor is E141. The Zn(2+) site is built by E142, E170, and H356.

This sequence belongs to the peptidase M20A family. DapE subfamily. As to quaternary structure, homodimer. Zn(2+) serves as cofactor. Co(2+) is required as a cofactor.

It carries out the reaction N-succinyl-(2S,6S)-2,6-diaminopimelate + H2O = (2S,6S)-2,6-diaminopimelate + succinate. It functions in the pathway amino-acid biosynthesis; L-lysine biosynthesis via DAP pathway; LL-2,6-diaminopimelate from (S)-tetrahydrodipicolinate (succinylase route): step 3/3. Its function is as follows. Catalyzes the hydrolysis of N-succinyl-L,L-diaminopimelic acid (SDAP), forming succinate and LL-2,6-diaminopimelate (DAP), an intermediate involved in the bacterial biosynthesis of lysine and meso-diaminopimelic acid, an essential component of bacterial cell walls. This is Succinyl-diaminopimelate desuccinylase from Ralstonia nicotianae (strain ATCC BAA-1114 / GMI1000) (Ralstonia solanacearum).